The chain runs to 213 residues: Lactobacillus shifted protein (213 aa).

The segment covering 28–38 (PRFTENAMQPN) has biased composition (polar residues). 2 disordered regions span residues 28-56 (PRFT…DATP) and 182-213 (PTSS…YEQR).

This chain is Lactobacillus shifted protein (lbsA), found in Emericella nidulans (strain FGSC A4 / ATCC 38163 / CBS 112.46 / NRRL 194 / M139) (Aspergillus nidulans).